A 277-amino-acid chain; its full sequence is 3-methyl-2-oxobutanoate hydroxymethyltransferase (277 aa).

Mg(2+)-binding residues include D43 and D82. 3-methyl-2-oxobutanoate contacts are provided by residues 43–44, D82, and K112; that span reads DS. E114 is a binding site for Mg(2+). The active-site Proton acceptor is E181.

Belongs to the PanB family. Homodecamer; pentamer of dimers. Requires Mg(2+) as cofactor.

Its subcellular location is the cytoplasm. It catalyses the reaction 3-methyl-2-oxobutanoate + (6R)-5,10-methylene-5,6,7,8-tetrahydrofolate + H2O = 2-dehydropantoate + (6S)-5,6,7,8-tetrahydrofolate. It functions in the pathway cofactor biosynthesis; (R)-pantothenate biosynthesis; (R)-pantoate from 3-methyl-2-oxobutanoate: step 1/2. Its function is as follows. Catalyzes the reversible reaction in which hydroxymethyl group from 5,10-methylenetetrahydrofolate is transferred onto alpha-ketoisovalerate to form ketopantoate. This chain is 3-methyl-2-oxobutanoate hydroxymethyltransferase, found in Exiguobacterium sp. (strain ATCC BAA-1283 / AT1b).